A 167-amino-acid chain; its full sequence is 2-C-methyl-D-erythritol 2,4-cyclodiphosphate synthase (167 aa).

Asp10 and His12 together coordinate a divalent metal cation. 4-CDP-2-C-methyl-D-erythritol 2-phosphate contacts are provided by residues 10-12 and 36-37; these read DVH and HS. Residue His44 participates in a divalent metal cation binding. 4-CDP-2-C-methyl-D-erythritol 2-phosphate contacts are provided by residues 58 to 60, 63 to 67, 134 to 137, Phe141, and Arg144; these read NIG, FPNTN, and TTSE.

This sequence belongs to the IspF family. As to quaternary structure, homotrimer. It depends on a divalent metal cation as a cofactor.

It catalyses the reaction 4-CDP-2-C-methyl-D-erythritol 2-phosphate = 2-C-methyl-D-erythritol 2,4-cyclic diphosphate + CMP. It participates in isoprenoid biosynthesis; isopentenyl diphosphate biosynthesis via DXP pathway; isopentenyl diphosphate from 1-deoxy-D-xylulose 5-phosphate: step 4/6. Functionally, involved in the biosynthesis of isopentenyl diphosphate (IPP) and dimethylallyl diphosphate (DMAPP), two major building blocks of isoprenoid compounds. Catalyzes the conversion of 4-diphosphocytidyl-2-C-methyl-D-erythritol 2-phosphate (CDP-ME2P) to 2-C-methyl-D-erythritol 2,4-cyclodiphosphate (ME-CPP) with a corresponding release of cytidine 5-monophosphate (CMP). The sequence is that of 2-C-methyl-D-erythritol 2,4-cyclodiphosphate synthase from Azobacteroides pseudotrichonymphae genomovar. CFP2.